Here is a 515-residue protein sequence, read N- to C-terminus: Maturase K (515 aa).

Belongs to the intron maturase 2 family. MatK subfamily.

It localises to the plastid. Its subcellular location is the chloroplast. Functionally, usually encoded in the trnK tRNA gene intron. Probably assists in splicing its own and other chloroplast group II introns. The chain is Maturase K from Pinus attenuata (Knobcone pine).